Consider the following 279-residue polypeptide: Shikimate dehydrogenase (NADP(+)) (279 aa).

Shikimate is bound by residues 14–16 (SLS) and Thr62. The Proton acceptor role is filled by Lys66. Asn87 and Asp103 together coordinate shikimate. Residues 127–131 (GAGGA), 151–156 (NRTKAK), and Met215 each bind NADP(+). Tyr217 is a shikimate binding site. Gly239 serves as a coordination point for NADP(+).

Belongs to the shikimate dehydrogenase family. Homodimer.

The catalysed reaction is shikimate + NADP(+) = 3-dehydroshikimate + NADPH + H(+). It functions in the pathway metabolic intermediate biosynthesis; chorismate biosynthesis; chorismate from D-erythrose 4-phosphate and phosphoenolpyruvate: step 4/7. Involved in the biosynthesis of the chorismate, which leads to the biosynthesis of aromatic amino acids. Catalyzes the reversible NADPH linked reduction of 3-dehydroshikimate (DHSA) to yield shikimate (SA). The chain is Shikimate dehydrogenase (NADP(+)) from Alteromonas mediterranea (strain DSM 17117 / CIP 110805 / LMG 28347 / Deep ecotype).